Reading from the N-terminus, the 46-residue chain is Mu-segestritoxin-Sf1f (46 aa).

Intrachain disulfides connect Cys3/Cys19, Cys10/Cys22, Cys18/Cys42, and Cys24/Cys40. Residues 31–33 form a keys region for toxin activity region; the sequence is RPW.

This sequence belongs to the neurotoxin 16 (SFI) family. In terms of tissue distribution, expressed by the venom gland.

The protein resides in the secreted. Insecticidal toxin. It inhibits insect voltage-gated sodium channels (Nav) by partially blocking the channel pore in DUM neurons from the American cockroach, not by acting as a gating modifier. The inhibition is only partially reversible after prolonged washout. In vivo, the toxin causes flaccid paralysis followed by death when injected into Heliothis virescens larvae. It also causes uncoordinated movements followed by full paralysis to sheep blowflies (Lucilia cuprina). When the toxin is fused to snowdrop lectin, it is orally active against larvae of the tomato moth (Laconobia oleracea), the rice brown planthopper (Nilaparvata lugens), and the peach-potato aphid (Myzus persicae). This is Mu-segestritoxin-Sf1f from Segestria florentina (Tube-web spider).